The sequence spans 277 residues: 3-methyl-2-oxobutanoate hydroxymethyltransferase (277 aa).

Mg(2+)-binding residues include Asp-43 and Asp-82. 3-methyl-2-oxobutanoate-binding positions include 43 to 44, Asp-82, and Lys-112; that span reads DS. Residue Glu-114 participates in Mg(2+) binding. Glu-181 functions as the Proton acceptor in the catalytic mechanism.

Belongs to the PanB family. In terms of assembly, homodecamer; pentamer of dimers. It depends on Mg(2+) as a cofactor.

The protein localises to the cytoplasm. It catalyses the reaction 3-methyl-2-oxobutanoate + (6R)-5,10-methylene-5,6,7,8-tetrahydrofolate + H2O = 2-dehydropantoate + (6S)-5,6,7,8-tetrahydrofolate. It participates in cofactor biosynthesis; (R)-pantothenate biosynthesis; (R)-pantoate from 3-methyl-2-oxobutanoate: step 1/2. Functionally, catalyzes the reversible reaction in which hydroxymethyl group from 5,10-methylenetetrahydrofolate is transferred onto alpha-ketoisovalerate to form ketopantoate. This chain is 3-methyl-2-oxobutanoate hydroxymethyltransferase, found in Listeria monocytogenes serotype 4b (strain CLIP80459).